The chain runs to 265 residues: Thymidine kinase 2, mitochondrial (265 aa).

Residues 1–33 (MLLWPLRGWAARALRCFGPGSRGSPASGPGPRR) constitute a mitochondrion transit peptide. Positions 20-32 (GSRGSPASGPGPR) are enriched in low complexity. The tract at residues 20 to 47 (GSRGSPASGPGPRRVQRRAWPPDKEQEK) is disordered. ATP is bound at residue 57–65 (GNIASGKTT). The Proton acceptor role is filled by E133.

Belongs to the DCK/DGK family. As to quaternary structure, monomer. As to expression, predominantly expressed in liver, pancreas, muscle, and brain.

The protein localises to the mitochondrion. The catalysed reaction is thymidine + ATP = dTMP + ADP + H(+). It catalyses the reaction 2'-deoxycytidine + ATP = dCMP + ADP + H(+). It carries out the reaction 2'-deoxyuridine + ATP = dUMP + ADP + H(+). Phosphorylates thymidine, deoxycytidine, and deoxyuridine in the mitochondrial matrix. In non-replicating cells, where cytosolic dNTP synthesis is down-regulated, mtDNA synthesis depends solely on TK2 and DGUOK. Widely used as target of antiviral and chemotherapeutic agents. The polypeptide is Thymidine kinase 2, mitochondrial (Homo sapiens (Human)).